Consider the following 404-residue polypeptide: Cysteine desulfurase IscS (404 aa).

Pyridoxal 5'-phosphate-binding positions include 75 to 76 (AT), Asn155, Gln183, and 203 to 205 (SAH). Lys206 carries the post-translational modification N6-(pyridoxal phosphate)lysine. Thr243 is a binding site for pyridoxal 5'-phosphate. Cys328 functions as the Cysteine persulfide intermediate in the catalytic mechanism. A [2Fe-2S] cluster-binding site is contributed by Cys328.

This sequence belongs to the class-V pyridoxal-phosphate-dependent aminotransferase family. NifS/IscS subfamily. Homodimer. Forms a heterotetramer with IscU, interacts with other sulfur acceptors. It depends on pyridoxal 5'-phosphate as a cofactor.

It is found in the cytoplasm. It catalyses the reaction (sulfur carrier)-H + L-cysteine = (sulfur carrier)-SH + L-alanine. The protein operates within cofactor biosynthesis; iron-sulfur cluster biosynthesis. Functionally, master enzyme that delivers sulfur to a number of partners involved in Fe-S cluster assembly, tRNA modification or cofactor biosynthesis. Catalyzes the removal of elemental sulfur atoms from cysteine to produce alanine. Functions as a sulfur delivery protein for Fe-S cluster synthesis onto IscU, an Fe-S scaffold assembly protein, as well as other S acceptor proteins. This is Cysteine desulfurase IscS from Vibrio vulnificus (strain CMCP6).